A 546-amino-acid chain; its full sequence is CTP synthase (546 aa).

The tract at residues 1–269 (MRSKKTKFIF…DERLAEVLNI (269 aa)) is amidoligase domain. Residue Ser-17 coordinates CTP. Position 17 (Ser-17) interacts with UTP. Residues 18-23 (SLGKGL) and Asp-75 each bind ATP. Residues Asp-75 and Glu-143 each coordinate Mg(2+). Residues 150–152 (DIE), 190–195 (KTKPTQ), and Lys-226 contribute to the CTP site. UTP contacts are provided by residues 190-195 (KTKPTQ) and Lys-226. The region spanning 295 to 537 (RIAIVGKYVN…IRAALAQRDA (243 aa)) is the Glutamine amidotransferase type-1 domain. Gly-357 contacts L-glutamine. The Nucleophile; for glutamine hydrolysis role is filled by Cys-384. Residues 385-388 (LGLQ), Glu-408, and Arg-465 each bind L-glutamine. Catalysis depends on residues His-510 and Glu-512.

Belongs to the CTP synthase family. As to quaternary structure, homotetramer.

The catalysed reaction is UTP + L-glutamine + ATP + H2O = CTP + L-glutamate + ADP + phosphate + 2 H(+). The enzyme catalyses L-glutamine + H2O = L-glutamate + NH4(+). It catalyses the reaction UTP + NH4(+) + ATP = CTP + ADP + phosphate + 2 H(+). It participates in pyrimidine metabolism; CTP biosynthesis via de novo pathway; CTP from UDP: step 2/2. Allosterically activated by GTP, when glutamine is the substrate; GTP has no effect on the reaction when ammonia is the substrate. The allosteric effector GTP functions by stabilizing the protein conformation that binds the tetrahedral intermediate(s) formed during glutamine hydrolysis. Inhibited by the product CTP, via allosteric rather than competitive inhibition. In terms of biological role, catalyzes the ATP-dependent amination of UTP to CTP with either L-glutamine or ammonia as the source of nitrogen. Regulates intracellular CTP levels through interactions with the four ribonucleotide triphosphates. This is CTP synthase from Myxococcus xanthus (strain DK1622).